Consider the following 456-residue polypeptide: Kynurenine 3-monooxygenase (456 aa).

The protein belongs to the aromatic-ring hydroxylase family. KMO subfamily. Requires FAD as cofactor.

The enzyme catalyses L-kynurenine + NADPH + O2 + H(+) = 3-hydroxy-L-kynurenine + NADP(+) + H2O. It participates in cofactor biosynthesis; NAD(+) biosynthesis; quinolinate from L-kynurenine: step 1/3. In terms of biological role, catalyzes the hydroxylation of L-kynurenine (L-Kyn) to form 3-hydroxy-L-kynurenine (L-3OHKyn). Required for synthesis of quinolinic acid. The polypeptide is Kynurenine 3-monooxygenase (Xanthomonas campestris pv. campestris (strain 8004)).